Reading from the N-terminus, the 844-residue chain is Protein translocase subunit SecA 1 (844 aa).

ATP-binding positions include Gln-91, 109–113 (GEGKT), and Asp-498. Residues 793–813 (KSKSFGEAKHVTAEDGKEKAK) show a composition bias toward basic and acidic residues. The tract at residues 793–825 (KSKSFGEAKHVTAEDGKEKAKPQPIVKGDQVGR) is disordered. Zn(2+)-binding residues include Cys-829, Cys-831, Cys-840, and His-841.

This sequence belongs to the SecA family. Monomer and homodimer. Part of the essential Sec protein translocation apparatus which comprises SecA, SecYEG and auxiliary proteins SecDF. Other proteins may also be involved. Requires Zn(2+) as cofactor.

It is found in the cell membrane. The protein localises to the cytoplasm. The catalysed reaction is ATP + H2O + cellular proteinSide 1 = ADP + phosphate + cellular proteinSide 2.. In terms of biological role, part of the Sec protein translocase complex. Interacts with the SecYEG preprotein conducting channel. Has a central role in coupling the hydrolysis of ATP to the transfer of proteins into and across the cell membrane, serving as an ATP-driven molecular motor driving the stepwise translocation of polypeptide chains across the membrane. The sequence is that of Protein translocase subunit SecA 1 from Staphylococcus epidermidis (strain ATCC 35984 / DSM 28319 / BCRC 17069 / CCUG 31568 / BM 3577 / RP62A).